Here is a 375-residue protein sequence, read N- to C-terminus: Succinyl-diaminopimelate desuccinylase (375 aa).

H66 serves as a coordination point for Zn(2+). D68 is a catalytic residue. D99 contacts Zn(2+). E133 acts as the Proton acceptor in catalysis. The Zn(2+) site is built by E134, E162, and H348.

Belongs to the peptidase M20A family. DapE subfamily. In terms of assembly, homodimer. Requires Zn(2+) as cofactor. Co(2+) serves as cofactor.

It catalyses the reaction N-succinyl-(2S,6S)-2,6-diaminopimelate + H2O = (2S,6S)-2,6-diaminopimelate + succinate. Its pathway is amino-acid biosynthesis; L-lysine biosynthesis via DAP pathway; LL-2,6-diaminopimelate from (S)-tetrahydrodipicolinate (succinylase route): step 3/3. Functionally, catalyzes the hydrolysis of N-succinyl-L,L-diaminopimelic acid (SDAP), forming succinate and LL-2,6-diaminopimelate (DAP), an intermediate involved in the bacterial biosynthesis of lysine and meso-diaminopimelic acid, an essential component of bacterial cell walls. In Methylobacillus flagellatus (strain ATCC 51484 / DSM 6875 / VKM B-1610 / KT), this protein is Succinyl-diaminopimelate desuccinylase.